Here is a 267-residue protein sequence, read N- to C-terminus: Probable tetrahydroxynaphthalene reductase MYCGRDRAFT_87994 (267 aa).

Ile-26, Asp-72, Asn-99, and Arg-132 together coordinate NADP(+). Ser-149 serves as the catalytic Proton donor. 4 residues coordinate NADP(+): Tyr-163, Lys-167, Ile-196, and Thr-198. Tyr-163 functions as the Proton acceptor in the catalytic mechanism. The Lowers pKa of active site Tyr role is filled by Lys-167.

Belongs to the short-chain dehydrogenases/reductases (SDR) family. In terms of assembly, homotetramer.

The catalysed reaction is scytalone + NADP(+) = naphthalene-1,3,6,8-tetrol + NADPH + H(+). It participates in pigment biosynthesis; melanin biosynthesis. In terms of biological role, probable tetrahydroxynaphthalene reductase; part of the gene cluster 29 that mediates the biosynthesis dihydroxynaphthalene (DHN)-melanin, a bluish-green pigment and a structural component of the conidial wall. Catalyzes the NADPH-dependent reduction of 1,3,6,8-tetrahydroxynaphthalene (T4HN) into (+)-scytalone. The sequence is that of Probable tetrahydroxynaphthalene reductase MYCGRDRAFT_87994 from Zymoseptoria tritici (strain CBS 115943 / IPO323) (Speckled leaf blotch fungus).